We begin with the raw amino-acid sequence, 78 residues long: D-alanyl carrier protein (78 aa).

One can recognise a Carrier domain in the interval 1–78 (MEFREQVLDL…KIVEVLEELR (78 aa)). O-(pantetheine 4'-phosphoryl)serine is present on Ser-36.

This sequence belongs to the DltC family. In terms of processing, 4'-phosphopantetheine is transferred from CoA to a specific serine of apo-DCP.

It localises to the cytoplasm. It participates in cell wall biogenesis; lipoteichoic acid biosynthesis. Carrier protein involved in the D-alanylation of lipoteichoic acid (LTA). The loading of thioester-linked D-alanine onto DltC is catalyzed by D-alanine--D-alanyl carrier protein ligase DltA. The DltC-carried D-alanyl group is further transferred to cell membrane phosphatidylglycerol (PG) by forming an ester bond, probably catalyzed by DltD. D-alanylation of LTA plays an important role in modulating the properties of the cell wall in Gram-positive bacteria, influencing the net charge of the cell wall. The chain is D-alanyl carrier protein from Staphylococcus xylosus.